Reading from the N-terminus, the 461-residue chain is Fumarate hydratase class II (461 aa).

Substrate-binding positions include 97–99, R125, 128–131, 138–140, and T186; these read SGT, HPND, and SSN. The active-site Proton donor/acceptor is H187. The active site involves S317. Substrate is bound by residues S318 and 323-325; that span reads KVN.

Belongs to the class-II fumarase/aspartase family. Fumarase subfamily. As to quaternary structure, homotetramer.

It localises to the cytoplasm. It catalyses the reaction (S)-malate = fumarate + H2O. The protein operates within carbohydrate metabolism; tricarboxylic acid cycle; (S)-malate from fumarate: step 1/1. In terms of biological role, involved in the TCA cycle. Catalyzes the stereospecific interconversion of fumarate to L-malate. This is Fumarate hydratase class II from Ralstonia nicotianae (strain ATCC BAA-1114 / GMI1000) (Ralstonia solanacearum).